The chain runs to 356 residues: Thrombomodulin (356 aa).

The Extracellular segment spans residues Arg1 to Ser296. EGF-like domains lie at Gly17–Gly57 and Ala60–Glu98. Cystine bridges form between Cys21–Cys32, Cys28–Cys41, Cys43–Cys56, Cys64–Cys72, Cys68–Cys82, Cys84–Cys97, Cys103–Cys114, Cys110–Cys123, Cys125–Cys136, Cys143–Cys152, Cys148–Cys162, Cys164–Cys178, Cys182–Cys191, Cys187–Cys199, Cys201–Cys213, Cys219–Cys228, Cys224–Cys237, and Cys239–Cys253. The EGF-like 3; calcium-binding domain maps to Asp99–Val137. EGF-like domains lie at Pro139–Gln179 and Cys178–Thr214. The EGF-like 6; calcium-binding domain occupies Asp215 to Asp254. The segment at Pro255–Pro290 is disordered. Residue Ser271 is glycosylated (O-linked (Xyl...) (chondroitin sulfate) serine). Residues Gly297–Leu320 form a helical membrane-spanning segment. At Arg321–Leu356 the chain is on the cytoplasmic side.

In terms of assembly, interacts with ITGAL, ITGAM and ITGB2. Interacts with thrombin/F2; this interaction switches the specificity of thrombin from a procoagulant to an anticoagulant and antifibrinolytic protease. Interacts with ANGP1 and ANGP2; these interactions significantly inhibit the generation of activated PC and TAFIa/CPB2 by the thrombin/thrombomodulin complex. Interacts with PF4; this interaction enhances generation of activated protein C. Interacts with HMGB1; this interaction inhibits HMGB1 inflammatory activity. Endothelial cells are unique in synthesizing thrombomodulin.

It localises to the membrane. In terms of biological role, endothelial cell receptor that plays a critical role in regulating several physiological processes including hemostasis, coagulation, fibrinolysis, inflammation, and angiogenesis. Acts as a cofactor for thrombin activation of protein C/PROC on the surface of vascular endothelial cells leading to initiation of the activated protein C anticoagulant pathway. Also accelerates the activation of the plasma carboxypeptidase B2/CPB2, which catalyzes removal of C-terminal basic amino acids from its substrates including kinins or anaphylatoxins leading to fibrinolysis inhibition. Plays critical protective roles in changing the cleavage specificity of protease-activated receptor 1/PAR1, inhibiting endothelial cell permeability and inflammation. Suppresses inflammation distinctly from its anticoagulant cofactor activity by sequestering HMGB1 thereby preventing it from engaging cellular receptors such as RAGE and contributing to the inflammatory response. In Bos taurus (Bovine), this protein is Thrombomodulin (THBD).